Here is a 185-residue protein sequence, read N- to C-terminus: Ribosome-recycling factor (185 aa).

The protein belongs to the RRF family.

It is found in the cytoplasm. Functionally, responsible for the release of ribosomes from messenger RNA at the termination of protein biosynthesis. May increase the efficiency of translation by recycling ribosomes from one round of translation to another. This Streptococcus pneumoniae serotype 2 (strain D39 / NCTC 7466) protein is Ribosome-recycling factor.